Consider the following 161-residue polypeptide: Cytochrome b6-f complex subunit 4 (161 aa).

The next 3 helical transmembrane spans lie at 37–57 (LLYI…GLAV), 96–116 (LLGV…PFIE), and 132–152 (TVFL…TFPI).

This sequence belongs to the cytochrome b family. PetD subfamily. As to quaternary structure, the 4 large subunits of the cytochrome b6-f complex are cytochrome b6, subunit IV (17 kDa polypeptide, PetD), cytochrome f and the Rieske protein, while the 4 small subunits are PetG, PetL, PetM and PetN. The complex functions as a dimer.

It is found in the cellular thylakoid membrane. In terms of biological role, component of the cytochrome b6-f complex, which mediates electron transfer between photosystem II (PSII) and photosystem I (PSI), cyclic electron flow around PSI, and state transitions. This Cyanothece sp. (strain PCC 7425 / ATCC 29141) protein is Cytochrome b6-f complex subunit 4.